The chain runs to 397 residues: GDNF family receptor alpha-3 (397 aa).

Positions 1–28 are cleaved as a signal peptide; it reads MGLSWSPRPPLLMILLLVLSLWLPLGAG. A disulfide bridge connects residues cysteine 48 and cysteine 54. 2 N-linked (GlcNAc...) asparagine glycosylation sites follow: asparagine 92 and asparagine 145. 10 disulfides stabilise this stretch: cysteine 159-cysteine 215, cysteine 166-cysteine 172, cysteine 183-cysteine 193, cysteine 188-cysteine 236, cysteine 217-cysteine 224, cysteine 245-cysteine 313, cysteine 252-cysteine 258, cysteine 269-cysteine 285, cysteine 278-cysteine 337, and cysteine 315-cysteine 325. Asparagine 306 is a glycosylation site (N-linked (GlcNAc...) asparagine). Asparagine 371 carries GPI-anchor amidated asparagine lipidation. Positions 372 to 397 are cleaved as a propeptide — removed in mature form; it reads PALRLQPRLPILSFSILPLILLQTLW.

This sequence belongs to the GDNFR family. In terms of assembly, interacts with ARTN ligand and RET: forms a 2:2:2 ternary complex composed of ARTN ligand, GFRA3 and RET receptor. Interacts with SORL1.

It is found in the cell membrane. Its function is as follows. Receptor for artemin (ARTN), a growth factor that supports the survival of sensory and sympathetic peripheral neurons. ARTN-binding leads to autophosphorylation and activation of the RET receptor. The chain is GDNF family receptor alpha-3 (Gfra3) from Mus musculus (Mouse).